Here is a 355-residue protein sequence, read N- to C-terminus: Alkanal monooxygenase alpha chain (355 aa).

The protein belongs to the bacterial luciferase oxidoreductase family. As to quaternary structure, heterodimer of an alpha and a beta chain.

The enzyme catalyses a long-chain fatty aldehyde + FMNH2 + O2 = a long-chain fatty acid + hnu + FMN + H2O + 2 H(+). Functionally, light-emitting reaction in luminous bacteria. The polypeptide is Alkanal monooxygenase alpha chain (luxA) (Vibrio harveyi (Beneckea harveyi)).